We begin with the raw amino-acid sequence, 629 residues long: ATP-dependent RNA helicase DeaD (629 aa).

The Q motif signature appears at 6 to 34 (TTFADLGLKAPILEALNDLGYEKPSPIQA). Residues 37–208 (IPHLLNGRDV…RRFMKEPQEV (172 aa)) enclose the Helicase ATP-binding domain. 50–57 (AQTGSGKT) contributes to the ATP binding site. Positions 156–159 (DEAD) match the DEAD box motif. In terms of domain architecture, Helicase C-terminal spans 232–379 (KNEALVRFLE…EVELPNAELL (148 aa)). Disordered regions lie at residues 438–481 (LIVP…RERR) and 560–629 (LGDA…GGDA). 2 stretches are compositionally biased toward basic and acidic residues: residues 446–481 (MRPK…RERR) and 568–629 (GGER…GGDA).

It belongs to the DEAD box helicase family. DeaD/CsdA subfamily. In terms of assembly, interacts with the 50S ribosomal subunit upon shifting to 15 degrees Celsius. Also found associated with the RNA degradosome at 15 degrees Celsius; binds RNase E (rne).

It localises to the cytoplasm. It carries out the reaction ATP + H2O = ADP + phosphate + H(+). DEAD-box RNA helicase involved in various cellular processes at low temperature, including ribosome biogenesis, mRNA degradation and translation initiation. Exhibits RNA-stimulated ATP hydrolysis and RNA unwinding activity at low temperature. Involved in 50S ribosomal subunit assembly, acting after SrmB, and could also play a role in the biogenesis of the 30S ribosomal subunit. In addition, is involved in mRNA decay, via formation of a cold-shock degradosome with RNase E. Also stimulates translation of some mRNAs, probably at the level of initiation. This chain is ATP-dependent RNA helicase DeaD, found in Escherichia coli (strain K12).